A 469-amino-acid chain; its full sequence is UTP--glucose-1-phosphate uridylyltransferase 2 (469 aa).

N-acetylalanine is present on alanine 2. UTP contacts are provided by residues 85–88 (LNGG), lysine 99, glutamine 162, and glycine 191. 87-88 (GG) serves as a coordination point for substrate. Substrate contacts are provided by residues histidine 192 and 220–222 (NSD). UTP contacts are provided by aspartate 222 and lysine 360.

This sequence belongs to the UDPGP type 1 family. Expressed in cauline leaves, flowers and siliques.

The protein localises to the cytoplasm. It carries out the reaction alpha-D-glucose 1-phosphate + UTP + H(+) = UDP-alpha-D-glucose + diphosphate. Converts glucose 1-phosphate to UDP-glucose, which is the major glycosyl donor for polysaccharides. Acts redundantly with UGP1 and is essential for the synthesis of sucrose, starch and cell wall, and callose deposition. This is UTP--glucose-1-phosphate uridylyltransferase 2 from Arabidopsis thaliana (Mouse-ear cress).